A 234-amino-acid chain; its full sequence is Glucosamine-6-phosphate deaminase (234 aa).

Aspartate 62 (proton acceptor; for enolization step) is an active-site residue. Asparagine 128 functions as the For ring-opening step in the catalytic mechanism. The active-site Proton acceptor; for ring-opening step is histidine 130. Glutamate 135 acts as the For ring-opening step in catalysis.

It belongs to the glucosamine/galactosamine-6-phosphate isomerase family. NagB subfamily.

It catalyses the reaction alpha-D-glucosamine 6-phosphate + H2O = beta-D-fructose 6-phosphate + NH4(+). Its pathway is amino-sugar metabolism; N-acetylneuraminate degradation; D-fructose 6-phosphate from N-acetylneuraminate: step 5/5. Catalyzes the reversible isomerization-deamination of glucosamine 6-phosphate (GlcN6P) to form fructose 6-phosphate (Fru6P) and ammonium ion. The chain is Glucosamine-6-phosphate deaminase from Streptococcus pyogenes serotype M3 (strain ATCC BAA-595 / MGAS315).